The sequence spans 828 residues: Isethionate sulfite-lyase (828 aa).

The region spanning 30–698 is the PFL domain; it reads ERVFTILESF…VVSATPNGRK (669 aa). 2-hydroxyethane-1-sulfonate contacts are provided by residues Arg-187, Gln-191, 466 to 468, and Arg-676; that span reads CTE. Cys-466 acts as the Cysteine radical intermediate in catalysis. The active-site Proton acceptor is Glu-468. In terms of domain architecture, Glycine radical spans 705–828; that stretch reads DGSSASHGAD…LIARTGHDVM (124 aa). A Glycine radical modification is found at Gly-803.

The protein belongs to the glycyl radical enzyme (GRE) family. As to quaternary structure, homodimer. In terms of processing, requires the activating protein IseH to generate the key active site glycyl radical on Gly-803 that is involved in catalysis.

The catalysed reaction is 2-hydroxyethane-1-sulfonate = acetaldehyde + sulfite + H(+). Its pathway is organosulfur degradation; alkanesulfonate degradation. Involved in an anaerobic respiration pathway that converts the sulfonate isethionate (2-hydroxyethanesulfonate) to ammonia, acetate and sulfide. Catalyzes the radical-mediated C-S bond cleavage of isethionate (2-hydroxyethanesulfonate) to form sulfite and acetaldehyde. Shows no activity with taurine or ethanolamine as substrates. The sequence is that of Isethionate sulfite-lyase from Nitratidesulfovibrio vulgaris (strain ATCC 29579 / DSM 644 / CCUG 34227 / NCIMB 8303 / VKM B-1760 / Hildenborough) (Desulfovibrio vulgaris).